The following is a 217-amino-acid chain: Adenosylcobinamide-GDP ribazoletransferase (217 aa).

The next 5 membrane-spanning stretches (helical) occupy residues 6–26 (ALLSFFTIIPAGVAKLDFKCA), 39–61 (GPAAAALWLGASPHVAYLLLLLM), 95–115 (GTGGIFAVVATYAVATASTAS), 116–136 (PLQLLLAEVFSKALIVTVAAF), and 162–182 (ALAVIICLRPAATLAALAVAL).

It belongs to the CobS family. Mg(2+) is required as a cofactor.

It is found in the cell membrane. It catalyses the reaction alpha-ribazole + adenosylcob(III)inamide-GDP = adenosylcob(III)alamin + GMP + H(+). It carries out the reaction alpha-ribazole 5'-phosphate + adenosylcob(III)inamide-GDP = adenosylcob(III)alamin 5'-phosphate + GMP + H(+). Its pathway is cofactor biosynthesis; adenosylcobalamin biosynthesis; adenosylcobalamin from cob(II)yrinate a,c-diamide: step 7/7. Its function is as follows. Joins adenosylcobinamide-GDP and alpha-ribazole to generate adenosylcobalamin (Ado-cobalamin). Also synthesizes adenosylcobalamin 5'-phosphate from adenosylcobinamide-GDP and alpha-ribazole 5'-phosphate. In Pyrobaculum calidifontis (strain DSM 21063 / JCM 11548 / VA1), this protein is Adenosylcobinamide-GDP ribazoletransferase.